The chain runs to 461 residues: tRNA modification GTPase MnmE (461 aa).

Residues Arg-27, Glu-89, and Arg-128 each coordinate (6S)-5-formyl-5,6,7,8-tetrahydrofolate. The TrmE-type G domain occupies 224 to 382 (GLATAIVGRP…LEELINKLFF (159 aa)). Asn-234 contributes to the K(+) binding site. GTP-binding positions include 234–239 (NVGKSS), 253–259 (TDVAGTT), and 278–281 (DTAG). Residue Ser-238 coordinates Mg(2+). Residues Thr-253, Val-255, and Thr-258 each coordinate K(+). Thr-259 is a Mg(2+) binding site. Lys-461 is a (6S)-5-formyl-5,6,7,8-tetrahydrofolate binding site.

It belongs to the TRAFAC class TrmE-Era-EngA-EngB-Septin-like GTPase superfamily. TrmE GTPase family. Homodimer. Heterotetramer of two MnmE and two MnmG subunits. It depends on K(+) as a cofactor.

It is found in the cytoplasm. Exhibits a very high intrinsic GTPase hydrolysis rate. Involved in the addition of a carboxymethylaminomethyl (cmnm) group at the wobble position (U34) of certain tRNAs, forming tRNA-cmnm(5)s(2)U34. The protein is tRNA modification GTPase MnmE of Lactobacillus helveticus (strain DPC 4571).